Consider the following 242-residue polypeptide: Transcriptional regulatory protein btr (242 aa).

The region spanning 158–231 is the HTH crp-type domain; it reads MRSEQRLAAF…QREVRLIDLP (74 aa). The segment at residues 191 to 210 is a DNA-binding region (H-T-H motif); sequence REEIGNYLGLTLETVSRLFS.

In terms of biological role, may regulate gene expression in response to changes in oxygen levels or to changes in the redox potential of the bacterial environment. This is Transcriptional regulatory protein btr (btr) from Bordetella pertussis (strain Tohama I / ATCC BAA-589 / NCTC 13251).